The following is a 468-amino-acid chain: Mitochondrial distribution and morphology protein 10 (468 aa).

Over residues 370 to 386 the composition is skewed to basic and acidic residues; the sequence is ERDGLPGIQRDDHDMHH. The segment at 370-394 is disordered; sequence ERDGLPGIQRDDHDMHHHPQRPHAS.

It belongs to the MDM10 family. In terms of assembly, component of the ER-mitochondria encounter structure (ERMES) or MDM complex, composed of MMM1, MDM10, MDM12 and MDM34. Associates with the mitochondrial outer membrane sorting assembly machinery SAM(core) complex.

The protein resides in the mitochondrion outer membrane. Functionally, component of the ERMES/MDM complex, which serves as a molecular tether to connect the endoplasmic reticulum and mitochondria. Components of this complex are involved in the control of mitochondrial shape and protein biogenesis and may function in phospholipid exchange. MDM10 is involved in the late assembly steps of the general translocase of the mitochondrial outer membrane (TOM complex). Functions in the TOM40-specific route of the assembly of outer membrane beta-barrel proteins, including the association of TOM40 with the receptor TOM22 and small TOM proteins. Can associate with the SAM(core) complex as well as the MDM12-MMM1 complex, both involved in late steps of the major beta-barrel assembly pathway, that is responsible for biogenesis of all outer membrane beta-barrel proteins. May act as a switch that shuttles between both complexes and channels precursor proteins into the TOM40-specific pathway. Plays a role in mitochondrial morphology and in the inheritance of mitochondria. The sequence is that of Mitochondrial distribution and morphology protein 10 from Ajellomyces dermatitidis (strain ER-3 / ATCC MYA-2586) (Blastomyces dermatitidis).